Here is a 618-residue protein sequence, read N- to C-terminus: Protease 4 (618 aa).

Residues 1–24 are Cytoplasmic-facing; sequence MRTLWRFIAGFFKWTWRVLNFVRE. The helical transmembrane segment at 25-45 threads the bilayer; it reads MVLNLFFIFLVLVGVGIWMQI. Topologically, residues 46-618 are periplasmic; that stretch reads GNGSNSEQTA…AFCLTCANVR (573 aa). The Proton donor/acceptor role is filled by Lys209. Ser409 (nucleophile) is an active-site residue.

Belongs to the peptidase S49 family. Homotetramer.

The protein localises to the cell inner membrane. Digests cleaved signal peptides in vitro, its in vivo function is unknown. This activity is necessary to maintain proper secretion of mature proteins across the membrane. The polypeptide is Protease 4 (sppA) (Salmonella typhi).